We begin with the raw amino-acid sequence, 1134 residues long: Translation initiation factor IF-2 (1134 aa).

Disordered regions lie at residues 55-465 (AQKS…HIIG) and 491-524 (LARPGKPKASKKSGSKPTGALRKRKKESTRQRQR). Polar residues-rich tracts occupy residues 56 to 65 (QKSSNSSSPP), 83 to 105 (SPPTKSEANAKTNASLDKTSSLK), 137 to 147 (PSISKNNSLKV), 208 to 234 (QIKQSSDLINRSPKTSPKQPIQEIQTN), and 251 to 264 (VQSQFNQKPGNNNL). 2 stretches are compositionally biased toward basic and acidic residues: residues 391 to 403 (KRGDLNKGPKKDG) and 438 to 450 (PDWDDAAKLEALR). Basic residues-rich tracts occupy residues 495–504 (GKPKASKKSG) and 511–524 (LRKRKKESTRQRQR). Residues 626 to 798 (RRPPVVTVMG…ILLVTEVEDL (173 aa)) form the tr-type G domain. Residues 635–642 (GHVDHGKT) are G1. 635–642 (GHVDHGKT) is a binding site for GTP. Residues 660 to 664 (GITQH) are G2. The interval 685–688 (DTPG) is G3. GTP-binding positions include 685–689 (DTPGH) and 739–742 (NKID). Positions 739 to 742 (NKID) are G4. The interval 775–777 (SAI) is G5.

Belongs to the TRAFAC class translation factor GTPase superfamily. Classic translation factor GTPase family. IF-2 subfamily.

It is found in the cytoplasm. Its function is as follows. One of the essential components for the initiation of protein synthesis. Protects formylmethionyl-tRNA from spontaneous hydrolysis and promotes its binding to the 30S ribosomal subunits. Also involved in the hydrolysis of GTP during the formation of the 70S ribosomal complex. This chain is Translation initiation factor IF-2, found in Prochlorococcus marinus (strain SARG / CCMP1375 / SS120).